Here is a 514-residue protein sequence, read N- to C-terminus: Intracellular exo-alpha-L-arabinofuranosidase (514 aa).

Residues glutamate 47 and asparagine 194 each contribute to the alpha-L-arabinofuranose site. Glutamate 195 (proton donor/acceptor) is an active-site residue. Alpha-L-arabinofuranose-binding residues include tyrosine 261, glutamate 317, and glutamine 366. The active-site Nucleophile is glutamate 317.

The protein belongs to the glycosyl hydrolase 51 family. Homohexamer; trimer of dimers.

It localises to the cytoplasm. It carries out the reaction Hydrolysis of terminal non-reducing alpha-L-arabinofuranoside residues in alpha-L-arabinosides.. It functions in the pathway glycan metabolism; L-arabinan degradation. Involved in the degradation of arabinan and is a key enzyme in the complete degradation of the plant cell wall. Catalyzes the cleavage of terminal alpha-L-arabinofuranosyl residues in different hemicellulosic homopolysaccharides (branched and debranched arabinans) and heteropolysaccharides (arabinoxylans). This is Intracellular exo-alpha-L-arabinofuranosidase (asdII) from Bacteroides ovatus.